A 118-amino-acid chain; its full sequence is Large ribosomal subunit protein uL24 (118 aa).

The protein belongs to the universal ribosomal protein uL24 family. As to quaternary structure, part of the 50S ribosomal subunit.

Functionally, one of two assembly initiator proteins, it binds directly to the 5'-end of the 23S rRNA, where it nucleates assembly of the 50S subunit. One of the proteins that surrounds the polypeptide exit tunnel on the outside of the subunit. This Prochlorococcus marinus (strain AS9601) protein is Large ribosomal subunit protein uL24.